A 465-amino-acid chain; its full sequence is uncharacterized protein (465 aa).

Disordered stretches follow at residues 95–173, 407–426, and 443–465; these read STST…RKDP, QEMEGKRNESKSDDEGKSDK, and ANPIETARMARRNRRSKGSSSKK. Residues 118–137 are compositionally biased toward basic residues; sequence KTGSKKVTRSKKSKKTKRRS. Positions 138–150 are enriched in low complexity; it reads STTVTTTTISNSK. The span at 153–173 shows a compositional bias: basic and acidic residues; the sequence is TPDKDKDSKDQRKQRTKRKDP. The segment covering 451 to 465 has biased composition (basic residues); that stretch reads MARRNRRSKGSSSKK.

This is an uncharacterized protein from Caenorhabditis elegans.